A 463-amino-acid chain; its full sequence is ATP-dependent protease ATPase subunit HslU (463 aa).

Residues Ile-19 and 61-66 each bind ATP; that span reads GVGKTE. Residues 154 to 175 are disordered; it reads FGGNQNSNQTSDAQEDDEIEKK. Polar residues predominate over residues 156-165; it reads GNQNSNQTSD. 3 residues coordinate ATP: Asp-277, Glu-341, and Arg-413.

This sequence belongs to the ClpX chaperone family. HslU subfamily. As to quaternary structure, a double ring-shaped homohexamer of HslV is capped on each side by a ring-shaped HslU homohexamer. The assembly of the HslU/HslV complex is dependent on binding of ATP.

It is found in the cytoplasm. Its function is as follows. ATPase subunit of a proteasome-like degradation complex; this subunit has chaperone activity. The binding of ATP and its subsequent hydrolysis by HslU are essential for unfolding of protein substrates subsequently hydrolyzed by HslV. HslU recognizes the N-terminal part of its protein substrates and unfolds these before they are guided to HslV for hydrolysis. The protein is ATP-dependent protease ATPase subunit HslU of Bacillus mycoides (strain KBAB4) (Bacillus weihenstephanensis).